Consider the following 143-residue polypeptide: Anti-sigma F factor (143 aa).

It belongs to the anti-sigma-factor family.

The enzyme catalyses L-seryl-[protein] + ATP = O-phospho-L-seryl-[protein] + ADP + H(+). The catalysed reaction is L-threonyl-[protein] + ATP = O-phospho-L-threonyl-[protein] + ADP + H(+). Binds to sigma F and blocks its ability to form an RNA polymerase holoenzyme (E-sigma F). Phosphorylates SpoIIAA on a serine residue. This phosphorylation may enable SpoIIAA to act as an anti-anti-sigma factor that counteracts SpoIIAB and thus releases sigma F from inhibition. The sequence is that of Anti-sigma F factor from Caldanaerobacter subterraneus subsp. tengcongensis (strain DSM 15242 / JCM 11007 / NBRC 100824 / MB4) (Thermoanaerobacter tengcongensis).